A 236-amino-acid polypeptide reads, in one-letter code: Endonuclease V (236 aa).

The Mg(2+) site is built by Asp-47 and Asp-115.

This sequence belongs to the endonuclease V family. The cofactor is Mg(2+).

Its subcellular location is the cytoplasm. It catalyses the reaction Endonucleolytic cleavage at apurinic or apyrimidinic sites to products with a 5'-phosphate.. In terms of biological role, DNA repair enzyme involved in the repair of deaminated bases. Selectively cleaves double-stranded DNA at the second phosphodiester bond 3' to a deoxyinosine leaving behind the intact lesion on the nicked DNA. The chain is Endonuclease V from Xanthomonas campestris pv. campestris (strain B100).